The sequence spans 246 residues: Probable site-specific recombinase in afa region (246 aa).

A Tyr recombinase domain is found at 40–225 (ATPAYLLAPE…FALDMAATLA (186 aa)). Residues R75, K102, H177, R180, and H203 contribute to the active site. The active-site O-(3'-phospho-DNA)-tyrosine intermediate is the Y212.

Belongs to the 'phage' integrase family.

The protein is Probable site-specific recombinase in afa region (int) of Escherichia coli.